Reading from the N-terminus, the 176-residue chain is HTH-type transcriptional regulator DctR (176 aa).

Residues V109–Y174 form the HTH luxR-type domain. Positions T133–H152 form a DNA-binding region, H-T-H motif.

In terms of biological role, may act as a transcriptional regulator of dctA. The protein is HTH-type transcriptional regulator DctR (dctR) of Escherichia coli (strain K12).